The sequence spans 438 residues: GTPase Der (438 aa).

EngA-type G domains follow at residues 4-168 (PVVA…DDNS) and 177-352 (TKVC…NNYS). GTP-binding positions include 10 to 17 (GRANVGKS), 57 to 61 (DTGGL), 120 to 123 (NKID), 183 to 190 (GKPNVGKS), 230 to 234 (DTAGL), and 295 to 298 (NKWD). The region spanning 353-437 (MRISTGVLND…PLQFEFKTRG (85 aa)) is the KH-like domain.

It belongs to the TRAFAC class TrmE-Era-EngA-EngB-Septin-like GTPase superfamily. EngA (Der) GTPase family. Associates with the 50S ribosomal subunit.

GTPase that plays an essential role in the late steps of ribosome biogenesis. This is GTPase Der from Finegoldia magna (strain ATCC 29328 / DSM 20472 / WAL 2508) (Peptostreptococcus magnus).